Here is a 199-residue protein sequence, read N- to C-terminus: Recombination protein RecR (199 aa).

A C4-type zinc finger spans residues 56-71 (CAICGNVSEKETCGIC). The Toprim domain occupies 79-174 (ATICVVEEAK…RVTRLASGLP (96 aa)).

It belongs to the RecR family.

Functionally, may play a role in DNA repair. It seems to be involved in an RecBC-independent recombinational process of DNA repair. It may act with RecF and RecO. The polypeptide is Recombination protein RecR (Clavibacter michiganensis subsp. michiganensis (strain NCPPB 382)).